We begin with the raw amino-acid sequence, 398 residues long: Membrane-spanning 4-domains subfamily A member 18 (398 aa).

4 consecutive transmembrane segments (helical) span residues 156-176 (LGAI…NPVL), 178-198 (YYPF…SYIV), 218-238 (SISF…IIIT), and 251-271 (AVSG…CVVS). Positions 316-346 (TGPVSATNGPVNTTIHPVNTTTSPVNTTTSP) are disordered. Residues 319–331 (VSATNGPVNTTIH) are compositionally biased toward polar residues. The span at 332 to 346 (PVNTTTSPVNTTTSP) shows a compositional bias: low complexity.

This sequence belongs to the MS4A family.

The protein resides in the membrane. The sequence is that of Membrane-spanning 4-domains subfamily A member 18 (MS4A18) from Homo sapiens (Human).